The primary structure comprises 303 residues: 4-hydroxy-3-methylbut-2-enyl diphosphate reductase (303 aa).

C12 is a [4Fe-4S] cluster binding site. (2E)-4-hydroxy-3-methylbut-2-enyl diphosphate is bound by residues H42 and H75. 2 residues coordinate dimethylallyl diphosphate: H42 and H75. H42 and H75 together coordinate isopentenyl diphosphate. C97 contributes to the [4Fe-4S] cluster binding site. Residue H125 participates in (2E)-4-hydroxy-3-methylbut-2-enyl diphosphate binding. Residue H125 participates in dimethylallyl diphosphate binding. An isopentenyl diphosphate-binding site is contributed by H125. E127 functions as the Proton donor in the catalytic mechanism. S164 contributes to the (2E)-4-hydroxy-3-methylbut-2-enyl diphosphate binding site. C192 lines the [4Fe-4S] cluster pocket. Residues S220, S221, N222, and S264 each contribute to the (2E)-4-hydroxy-3-methylbut-2-enyl diphosphate site. Dimethylallyl diphosphate-binding residues include S220, S221, N222, and S264. Isopentenyl diphosphate contacts are provided by S220, S221, N222, and S264.

The protein belongs to the IspH family. Requires [4Fe-4S] cluster as cofactor.

The enzyme catalyses isopentenyl diphosphate + 2 oxidized [2Fe-2S]-[ferredoxin] + H2O = (2E)-4-hydroxy-3-methylbut-2-enyl diphosphate + 2 reduced [2Fe-2S]-[ferredoxin] + 2 H(+). The catalysed reaction is dimethylallyl diphosphate + 2 oxidized [2Fe-2S]-[ferredoxin] + H2O = (2E)-4-hydroxy-3-methylbut-2-enyl diphosphate + 2 reduced [2Fe-2S]-[ferredoxin] + 2 H(+). It functions in the pathway isoprenoid biosynthesis; dimethylallyl diphosphate biosynthesis; dimethylallyl diphosphate from (2E)-4-hydroxy-3-methylbutenyl diphosphate: step 1/1. Its pathway is isoprenoid biosynthesis; isopentenyl diphosphate biosynthesis via DXP pathway; isopentenyl diphosphate from 1-deoxy-D-xylulose 5-phosphate: step 6/6. Its function is as follows. Catalyzes the conversion of 1-hydroxy-2-methyl-2-(E)-butenyl 4-diphosphate (HMBPP) into a mixture of isopentenyl diphosphate (IPP) and dimethylallyl diphosphate (DMAPP). Acts in the terminal step of the DOXP/MEP pathway for isoprenoid precursor biosynthesis. The polypeptide is 4-hydroxy-3-methylbut-2-enyl diphosphate reductase (Neorickettsia sennetsu (strain ATCC VR-367 / Miyayama) (Ehrlichia sennetsu)).